A 41-amino-acid polypeptide reads, in one-letter code: U3-theraphotoxin-Hs1a (41 aa).

Disulfide bonds link cysteine 2-cysteine 16, cysteine 9-cysteine 37, and cysteine 17-cysteine 40.

This sequence belongs to the neurotoxin 14 (magi-1) family. 01 (HNTX-16) subfamily. As to expression, expressed by the venom gland.

The protein resides in the secreted. Its function is as follows. Intracerebroventricular injection paralyzes mice. Has no effect on voltage-gated sodium currents. The sequence is that of U3-theraphotoxin-Hs1a from Cyriopagopus schmidti (Chinese bird spider).